The primary structure comprises 488 residues: N-succinylglutamate 5-semialdehyde dehydrogenase (488 aa).

221–226 provides a ligand contact to NAD(+); it reads GSSRTG. Residues Glu-244 and Cys-278 contribute to the active site.

It belongs to the aldehyde dehydrogenase family. AstD subfamily.

It carries out the reaction N-succinyl-L-glutamate 5-semialdehyde + NAD(+) + H2O = N-succinyl-L-glutamate + NADH + 2 H(+). It functions in the pathway amino-acid degradation; L-arginine degradation via AST pathway; L-glutamate and succinate from L-arginine: step 4/5. Catalyzes the NAD-dependent reduction of succinylglutamate semialdehyde into succinylglutamate. This is N-succinylglutamate 5-semialdehyde dehydrogenase from Pseudomonas savastanoi pv. phaseolicola (strain 1448A / Race 6) (Pseudomonas syringae pv. phaseolicola (strain 1448A / Race 6)).